Consider the following 190-residue polypeptide: Threonylcarbamoyl-AMP synthase (190 aa).

In terms of domain architecture, YrdC-like spans 7–190 (RDAIAAAIDV…ALTGELFRQG (184 aa)).

The protein belongs to the SUA5 family. TsaC subfamily.

Its subcellular location is the cytoplasm. The catalysed reaction is L-threonine + hydrogencarbonate + ATP = L-threonylcarbamoyladenylate + diphosphate + H2O. Functionally, required for the formation of a threonylcarbamoyl group on adenosine at position 37 (t(6)A37) in tRNAs that read codons beginning with adenine. Catalyzes the conversion of L-threonine, HCO(3)(-)/CO(2) and ATP to give threonylcarbamoyl-AMP (TC-AMP) as the acyladenylate intermediate, with the release of diphosphate. This chain is Threonylcarbamoyl-AMP synthase, found in Escherichia coli O9:H4 (strain HS).